The chain runs to 479 residues: Deoxyribodipyrimidine photo-lyase (479 aa).

Residues 6–132 enclose the Photolyase/cryptochrome alpha/beta domain; sequence APVIVWFRKD…TVRSFSGQLL (127 aa). Tyr226 provides a ligand contact to FAD. Residue Arg230 coordinates DNA. FAD-binding positions include 238-242 and 277-284; these read TSLLS and EIVWREFC. Interaction with DNA stretches follow at residues 277-284 and 343-344; these read EIVWREFC and NR. 374–376 provides a ligand contact to FAD; that stretch reads DAD. Gln406 contacts DNA.

The protein belongs to the DNA photolyase class-3 family. Requires FAD as cofactor. (6R)-5,10-methylene-5,6,7,8-tetrahydrofolate is required as a cofactor.

It catalyses the reaction cyclobutadipyrimidine (in DNA) = 2 pyrimidine residues (in DNA).. Functionally, photolyase involved in the repair of UV radiation-induced DNA damage. By using blue-light energy, catalyzes the photoreactivation of cyclobutane pyrimidine dimers (CPDs), which are formed between adjacent bases on the same DNA strand upon exposure to ultraviolet radiation. Can repair CPD lesions in ssDNA as well as in dsDNA. The sequence is that of Deoxyribodipyrimidine photo-lyase from Agrobacterium fabrum (strain C58 / ATCC 33970) (Agrobacterium tumefaciens (strain C58)).